A 151-amino-acid chain; its full sequence is Small ribosomal subunit protein bS6 (151 aa).

Residues 97–151 (EAEPSAMMQKRDRDDRKDRDRGDRPRRRDDDFGGGDRGDRGDRGDRPERNFGGEN) are disordered. A compositionally biased stretch (basic and acidic residues) spans 105-151 (QKRDRDDRKDRDRGDRPRRRDDDFGGGDRGDRGDRGDRPERNFGGEN).

The protein belongs to the bacterial ribosomal protein bS6 family.

In terms of biological role, binds together with bS18 to 16S ribosomal RNA. The chain is Small ribosomal subunit protein bS6 from Methylorubrum extorquens (strain CM4 / NCIMB 13688) (Methylobacterium extorquens).